Consider the following 2845-residue polypeptide: Adenomatous polyposis coli protein (2845 aa).

Alanine 2 carries the post-translational modification N-acetylalanine. A coiled-coil region spans residues 2–61 (AAASYDQLLKQVEALKMENSNLRQELEDNSNHLTKLETEASNMKEVLKQLQGSIEDETMT). Phosphoserine occurs at positions 105 and 109. Positions 125 to 245 (SRESTGYLEE…QAAEAERSSQ (121 aa)) form a coiled coil. Residues 238–304 (AEAERSSQSR…THSAPRRLTS (67 aa)) are disordered. Over residues 239 to 263 (EAERSSQSRHDAASHEAGRQHEGHG) the composition is skewed to basic and acidic residues. Residues 266–279 (ESNTAASSSGQSPA) are compositionally biased toward polar residues. ARM repeat units lie at residues 451–493 (LMKL…HYSV), 503–545 (LTNL…IASV), 546–589 (LRNL…VLSA), 590–636 (LWNL…GGGI), 637–681 (LRNV…ACGT), 682–723 (LWNL…SAAA), and 724–765 (LRNL…LDAQ). Phosphoserine occurs at positions 742, 746, and 778. The disordered stretch occupies residues 828 to 873 (VLPSSSSSRGSLDSSRSEKDRSLERERGIGLSAYHPTTENAGTSSK). A compositionally biased stretch (low complexity) spans 831–841 (SSSSSRGSLDS). The segment covering 842-855 (SRSEKDRSLERERG) has biased composition (basic and acidic residues). Over residues 862-873 (HPTTENAGTSSK) the composition is skewed to polar residues. Residue serine 906 is modified to Phosphoserine. Disordered stretches follow at residues 921–942 (RRSS…ENSN) and 956–986 (RSSN…SYSE). Polar residues predominate over residues 927–942 (HTHSNTYNFTKSENSN). Positions 959–969 (NDSLNSVTSSD) are enriched in low complexity. A phosphoserine mark is found at serine 985, serine 1036, and serine 1040. The tract at residues 1018 to 1168 (ELDTPINYSL…TNYSIKYNEE (151 aa)) is interaction with catenins. Disordered regions lie at residues 1058–1079 (IKQN…YSEN), 1092–1168 (GQQE…YNEE), 1189–1247 (SQKP…GTTC), and 1307–1375 (ENDV…PEHY). 2 stretches are compositionally biased toward polar residues: residues 1066–1078 (ARSQ…VYSE) and 1103–1128 (RGTS…QSLC). Low complexity predominate over residues 1189–1204 (SQKPSFSFSKNSSAQS). Residues 1211 to 1245 (SPSSENTAVPPSNAKRQNQLRPSSAQRNGQTQKGT) show a composition bias toward polar residues. Low complexity predominate over residues 1354–1365 (SSGAKSPSKSGA). Phosphoserine is present on residues serine 1359, serine 1370, serine 1384, serine 1391, and serine 1394. 5 disordered regions span residues 1400–1474 (IASS…VNAA), 1525–1568 (PPVQ…SDDD), 1587–1606 (RKAK…VARK), 1746–2010 (DQVQ…APKS), and 2042–2069 (ISSA…KVGG). Threonine 1437 carries the phosphothreonine modification. Positions 1447–1465 (AKREVPKSKVPAAEKRESG) are enriched in basic and acidic residues. Positions 1532–1546 (NGNETESEQPEESNE) are enriched in acidic residues. The span at 1547 to 1562 (NQDKEVEKPDSEKDLL) shows a compositional bias: basic and acidic residues. Serine 1565 bears the Phosphoserine mark. The segment covering 1747-1762 (QVQQASSTSSGANKNQ) has biased composition (polar residues). Serine 1772 bears the Phosphoserine mark. Residues 1783–1792 (YRTRVRKNTD) are compositionally biased toward basic and acidic residues. Phosphoserine is present on residues serine 1859, serine 1861, and serine 1862. Residues 1864 to 1891 (DFDDDDVDLSREKAELRKGKESKDSEAK) form a highly charged region. Residues 1871–1894 (DLSREKAELRKGKESKDSEAKVTC) are compositionally biased toward basic and acidic residues. Positions 1900–1911 (SSQQAASKSQAS) are enriched in low complexity. Polar residues predominate over residues 1927–1936 (KQPTFPQSSK). Over residues 1937 to 1949 (DGPDRGAATDEKL) the composition is skewed to basic and acidic residues. Phosphoserine occurs at positions 1969 and 1971. Basic and acidic residues predominate over residues 1979-1990 (NNKESEPIKEAE). Residues 2034–2058 (EDDLLQECISSAMPKKKRPSRLKSE) form an interaction with AXIN1 region. Serine 2087, serine 2092, serine 2125, serine 2129, serine 2130, and serine 2132 each carry phosphoserine. 3 disordered regions span residues 2146-2190 (SPFH…GIKG), 2202-2652 (KIRS…PPVS), and 2664-2845 (CPIN…VTSV). A Phosphothreonine modification is found at threonine 2151. The tract at residues 2167–2674 (ILKPGEKSTL…PINNPRSGRS (508 aa)) is basic region. Over residues 2169-2187 (KPGEKSTLEAKKIESENKG) the composition is skewed to basic and acidic residues. Polar residues-rich tracts occupy residues 2203-2223 (IRSN…NMPS) and 2257-2272 (ASKS…TSPR). 3 positions are modified to phosphoserine: serine 2260, serine 2270, and serine 2283. A compositionally biased stretch (low complexity) spans 2290–2311 (SQISGSNKGSSRSGSRDSTPSR). Residues 2312–2331 (PTQQPLSRPMQSPGRNSISP) are compositionally biased toward polar residues. The segment covering 2348 to 2369 (TSSPSTASTKSSGSGKMSYTSP) has biased composition (low complexity). Residues 2370–2411 (GRQLSQQNLTKQASLSKNASSIPRSESASKGLNQMSNGNGSN) are compositionally biased toward polar residues. Low complexity-rich tracts occupy residues 2417–2429 (SRMS…GSES) and 2459–2477 (SASF…PTRS). Phosphoserine is present on residues serine 2473 and serine 2535. The interval 2475–2845 (TRSQAQTPVL…HSGSYLVTSV (371 aa)) is interaction with DLG1. A compositionally biased stretch (basic and acidic residues) spans 2518–2535 (NDGRPTKRHDIARSHSES). Residues 2555–2568 (SSSLPRVSTWRRTG) are compositionally biased toward polar residues. Residue serine 2569 is modified to Phosphoserine. Residues 2569–2579 (SSSSILSASSE) are compositionally biased toward low complexity. Basic and acidic residues predominate over residues 2580–2592 (SSEKAKSEDERHV). The segment covering 2626–2638 (ASQSASSGAASGA) has biased composition (low complexity). Over residues 2668 to 2679 (NPRSGRSPTGNT) the composition is skewed to polar residues. Serine 2671 and serine 2674 each carry phosphoserine. The interaction with MAPRE1 stretch occupies residues 2674–2845 (SPTGNTPPVI…HSGSYLVTSV (172 aa)). Threonine 2679 carries the post-translational modification Phosphothreonine. Low complexity predominate over residues 2684-2694 (DSVSEKGSSSI). Basic and acidic residues predominate over residues 2695-2705 (KDSKDSKDTHG). The span at 2706–2716 (KQSVGSGSPVQ) shows a compositional bias: polar residues. Residues serine 2713 and serine 2726 each carry the phosphoserine modification. The segment covering 2765-2776 (SSSSSSKHSSPS) has biased composition (low complexity). Polar residues predominate over residues 2786–2814 (FNYNPSPRKSSADSTSARPSQIPTPVSTN). Position 2791 is a phosphoserine (serine 2791). A Microtubule tip localization signal motif is present at residues 2805 to 2808 (SQIP). The PDZ-binding signature appears at 2843 to 2845 (TSV).

The protein belongs to the adenomatous polyposis coli (APC) family. As to quaternary structure, forms homooligomers. Found in a complex consisting of ARHGEF4, APC and CTNNB1. Found in a complex composed of MACF1, APC, AXIN1, CTNNB1 and GSK3B. The complex composed, at least, of APC, CTNNB1 and GSK3B interacts with JPT1; the interaction requires the inactive form of GSK3B (phosphorylated at 'Ser-9'). Interacts with APC2. Interacts with DLG1 (via PDZ domains) and DLG3 (via PDZ domains). Interacts with alpha- and beta-catenins. Interacts with AXIN1 (via RGS domain). Interacts with ARHGEF4 (via N-terminus). Interacts (via C-terminal residues 2674-2843) with MAPRE1 (via C-terminal residues 206-211); the interaction inhibits association with and bundling of F-actin. Interacts with MAPRE2 and MAPRE3 (via C-terminus). Interacts with DIAPH1; DIAPH1 acts as a scaffold protein for MAPRE1 and APC to stabilize microtubules and promote cell migration. Interacts with DIAPH2. Interacts with SCRIB; may mediate targeting to adherens junctions of epithelial cells. Interacts with SPATA13 (via N-terminus and SH3 domain). Interacts with ASAP1 (via SH3 domain). Interacts (at the cell membrane) with AMER1 and AMER2 (via ARM repeats). Interacts with KHDRBS1. Interacts with actin; binds both to F-actin and actin filament bundles. Post-translationally, phosphorylated; phosphorylation enhances the F-actin bundling activity. Phosphorylated by GSK3B. In terms of processing, ubiquitinated, leading to its degradation by the proteasome. Ubiquitination is facilitated by Axin. Deubiquitinated by ZRANB1/TRABID. As to expression, expressed in liver, spleen, kidney, heart, lung, brain, stomach, intestine, testis and ovary.

It localises to the cell junction. Its subcellular location is the adherens junction. The protein resides in the cytoplasm. It is found in the cytoskeleton. The protein localises to the cell projection. It localises to the lamellipodium. Its subcellular location is the ruffle membrane. The protein resides in the cell membrane. Tumor suppressor. Promotes rapid degradation of CTNNB1 and participates in Wnt signaling as a negative regulator. APC activity is correlated with its phosphorylation state. Activates the GEF activity of SPATA13 and ARHGEF4. Plays a role in hepatocyte growth factor (HGF)-induced cell migration. Required for MMP9 up-regulation via the JNK signaling pathway in colorectal tumor cells. Associates with both microtubules and actin filaments, components of the cytoskeleton. Plays a role in mediating the organization of F-actin into ordered bundles. Functions downstream of Rho GTPases and DIAPH1 to selectively stabilize microtubules. Acts as a mediator of ERBB2-dependent stabilization of microtubules at the cell cortex. It is required for the localization of MACF1 to the cell membrane and this localization of MACF1 is critical for its function in microtubule stabilization. In Mus musculus (Mouse), this protein is Adenomatous polyposis coli protein (Apc).